Here is a 376-residue protein sequence, read N- to C-terminus: METLSNASGTFAIRLLKILCQDNPSHNVFCSPVSISSALAMVLLGAKGNTATQMAQALSLNTEEDIHRAFQSLLTEVNKAGTQYLLRTANRLFGEKTCQFLSTFKESCLQFYHAELKELSFIRAAEESRKHINTWVSKKTEGKIEELLPGSSIDAETRLVLVNAIYFKGKWNEPFDETYTREMPFKINQEEQRPVQMMYQEATFKLAHVGEVRAQLLELPYARKELSLLVLLPDDGVELSTVEKSLTFEKLTAWTKPDCMKSTEVEVLLPKFKLQEDYDMESVLRHLGIVDAFQQGKADLSAMSAERDLCLSKFVHKSFVEVNEEGTEAAAASSCFVVAECCMESGPRFCADHPFLFFIRHNRANSILFCGRFSSP.

Met1 is modified (N-acetylmethionine).

Belongs to the serpin family. Ov-serpin subfamily.

It localises to the cytoplasm. Functionally, granzyme B inhibitor. This is Serpin B9 (SERPINB9) from Homo sapiens (Human).